The primary structure comprises 360 residues: Peptide chain release factor 1 (360 aa).

N5-methylglutamine is present on Gln-236. The segment at 288–308 (QDEQDAERKSTIGTGDRSERI) is disordered. Residues 293 to 308 (AERKSTIGTGDRSERI) show a composition bias toward basic and acidic residues.

The protein belongs to the prokaryotic/mitochondrial release factor family. Post-translationally, methylated by PrmC. Methylation increases the termination efficiency of RF1.

The protein resides in the cytoplasm. In terms of biological role, peptide chain release factor 1 directs the termination of translation in response to the peptide chain termination codons UAG and UAA. The polypeptide is Peptide chain release factor 1 (Streptococcus equi subsp. equi (strain 4047)).